Consider the following 57-residue polypeptide: Large ribosomal subunit protein bL32 (57 aa).

The protein belongs to the bacterial ribosomal protein bL32 family.

This is Large ribosomal subunit protein bL32 from Streptomyces avermitilis (strain ATCC 31267 / DSM 46492 / JCM 5070 / NBRC 14893 / NCIMB 12804 / NRRL 8165 / MA-4680).